We begin with the raw amino-acid sequence, 292 residues long: ATP synthase gamma chain (292 aa).

Belongs to the ATPase gamma chain family. In terms of assembly, F-type ATPases have 2 components, CF(1) - the catalytic core - and CF(0) - the membrane proton channel. CF(1) has five subunits: alpha(3), beta(3), gamma(1), delta(1), epsilon(1). CF(0) has three main subunits: a, b and c.

The protein localises to the cell inner membrane. Its function is as follows. Produces ATP from ADP in the presence of a proton gradient across the membrane. The gamma chain is believed to be important in regulating ATPase activity and the flow of protons through the CF(0) complex. The protein is ATP synthase gamma chain of Rhodopseudomonas palustris (strain BisB18).